Consider the following 427-residue polypeptide: Rhodocoxin reductase (427 aa).

2 to 34 (SIVIIGSGQAGFEAAVSLRSHGFSGTITLVGDE) contributes to the FAD binding site. Residue 144-172 (SLVVIGAGFIGLEVAAAARKKGLDVTVVE) participates in NAD(+) binding.

It belongs to the FAD-dependent oxidoreductase family. Requires FAD as cofactor.

Its function is as follows. The degradation of the thiocarbamate herbicide EPTC by cytochrome CYP116 (thcB) requires the participation of a flavoprotein, rhodocoxin reductase, and an iron-sulfur protein, rhodocoxin, to mediate the transfer of electrons from NADH to P450 for oxygen activation. The polypeptide is Rhodocoxin reductase (thcD) (Rhodococcus erythropolis (Arthrobacter picolinophilus)).